The chain runs to 292 residues: 2-(5''-triphosphoribosyl)-3'-dephosphocoenzyme-A synthase (292 aa).

This sequence belongs to the CitG/MdcB family.

It carries out the reaction 3'-dephospho-CoA + ATP = 2'-(5''-triphospho-alpha-D-ribosyl)-3'-dephospho-CoA + adenine. In terms of biological role, catalyzes the formation of 2-(5''-triphosphoribosyl)-3'-dephosphocoenzyme-A, the precursor of the prosthetic group of the holo-acyl carrier protein (gamma chain) of citrate lyase, from ATP and dephospho-CoA. The polypeptide is 2-(5''-triphosphoribosyl)-3'-dephosphocoenzyme-A synthase (Escherichia coli (strain ATCC 8739 / DSM 1576 / NBRC 3972 / NCIMB 8545 / WDCM 00012 / Crooks)).